The chain runs to 486 residues: UDP-N-acetylmuramate--L-alanine ligase (486 aa).

Residue 123–129 (GTHGKTT) participates in ATP binding.

The protein belongs to the MurCDEF family.

The protein resides in the cytoplasm. The enzyme catalyses UDP-N-acetyl-alpha-D-muramate + L-alanine + ATP = UDP-N-acetyl-alpha-D-muramoyl-L-alanine + ADP + phosphate + H(+). Its pathway is cell wall biogenesis; peptidoglycan biosynthesis. Its function is as follows. Cell wall formation. The chain is UDP-N-acetylmuramate--L-alanine ligase from Pseudomonas savastanoi pv. phaseolicola (strain 1448A / Race 6) (Pseudomonas syringae pv. phaseolicola (strain 1448A / Race 6)).